The sequence spans 322 residues: MDGNHTIWIEKYRPRRLDEMVGQKDIVVRLQSYVKTGNLPHLLFTGSAGIGKTTAAVALAREFFGDSWQTNFREMNASDERGIDVVRNQIKEFARTSPLAGATFKILFLDEADALTTDAQAALRRTMETYARTCRFILSCNYSSKIIDPIQSRCAIYRFRPLDREAVIEETRRIAAAEGLTVTEGALDAIVYVASGDMRKAINALQGAAILRTDIDEETIFEITATARPEEIDELLDLSIGGRFDEAEQALLELTHVRGIAPNELINQCYRALVQRDIDRTLKVKLIDALGETDFRLSEGASSDIQMEALLARFVLAAEQHR.

46–53 (GSAGIGKT) provides a ligand contact to ATP.

It belongs to the activator 1 small subunits family. RfcS subfamily. In terms of assembly, heteromultimer composed of small subunits (RfcS) and large subunits (RfcL).

Its function is as follows. Part of the RFC clamp loader complex which loads the PCNA sliding clamp onto DNA. In Methanoculleus marisnigri (strain ATCC 35101 / DSM 1498 / JR1), this protein is Replication factor C small subunit.